The sequence spans 245 residues: 1-(5-phosphoribosyl)-5-[(5-phosphoribosylamino)methylideneamino] imidazole-4-carboxamide isomerase (245 aa).

The Proton acceptor role is filled by Asp7. Catalysis depends on Asp129, which acts as the Proton donor.

The protein belongs to the HisA/HisF family.

The protein localises to the cytoplasm. It catalyses the reaction 1-(5-phospho-beta-D-ribosyl)-5-[(5-phospho-beta-D-ribosylamino)methylideneamino]imidazole-4-carboxamide = 5-[(5-phospho-1-deoxy-D-ribulos-1-ylimino)methylamino]-1-(5-phospho-beta-D-ribosyl)imidazole-4-carboxamide. It functions in the pathway amino-acid biosynthesis; L-histidine biosynthesis; L-histidine from 5-phospho-alpha-D-ribose 1-diphosphate: step 4/9. This Escherichia coli O81 (strain ED1a) protein is 1-(5-phosphoribosyl)-5-[(5-phosphoribosylamino)methylideneamino] imidazole-4-carboxamide isomerase.